The chain runs to 1102 residues: WD repeat-containing protein 72 (1102 aa).

WD repeat units lie at residues 15 to 54 (APPH…KISA), 60 to 102 (GHSA…CMEK), 160 to 197 (NCMC…NSIQ), 318 to 362 (KEQS…VSKF), 402 to 441 (AGTA…KARL), 459 to 504 (GHHQ…ILHK), 507 to 552 (LEAG…CLLH), and 555 to 594 (KHLF…LERH). Phosphoserine occurs at positions 1081 and 1083.

It localises to the cytoplasmic vesicle. Its function is as follows. Plays a major role in formation of tooth enamel. Specifically required during the maturation phase of amelogenesis for normal formation of the enamel matrix and clearance of enamel proteins. May be involved in localization of the calcium transporter SLC24A4 to the ameloblast cell membrane. The sequence is that of WD repeat-containing protein 72 (WDR72) from Homo sapiens (Human).